We begin with the raw amino-acid sequence, 597 residues long: Nuclear factor erythroid 2-related factor 2 (597 aa).

The short motif at 29–31 (DLG) is the DLG motif element. Serine 40 is modified (phosphoserine; by PKC). Residues 79–82 (ETGE) carry the ETGE motif motif. Serine 207 is subject to Phosphoserine. Residues 327 to 440 (TMEFNDSDSG…APFTKDKHSS (114 aa)) form a disordered region. Over residues 333–345 (SDSGISLNTSPSR) the composition is skewed to polar residues. N-linked (Glc) (glycation) lysine glycosylation is found at lysine 454, lysine 464, and lysine 479. The bZIP domain occupies 489–552 (LIRDIRRRGK…HLLKRRLSTL (64 aa)). The N-linked (Glc) (glycation) arginine glycan is linked to arginine 491. Residues 491-510 (RDIRRRGKNKVAAQNCRKRK) are basic motif. A leucine-zipper region spans residues 514-521 (IVELEQDL). Arginine 561 is a glycosylation site (N-linked (Glc) (glycation) arginine). Positions 563–597 (EDGKPYSPSEYSLQQTRDGNVFLVPKSKKPDTKKN) are disordered. Lysine 566 carries N-linked (Glc) (glycation) lysine glycosylation. Residues 571-580 (SEYSLQQTRD) are compositionally biased toward polar residues. Positions 583 to 588 (VFLVPK) are mediates interaction with CHD6 and is necessary to activate transcription. 2 positions are modified to N6-acetyllysine; by CREBBP: lysine 588 and lysine 591.

Belongs to the bZIP family. CNC subfamily. As to quaternary structure, heterodimer; heterodimerizes with small Maf proteins. Interacts (via the bZIP domain) with MAFG and MAFK; required for binding to antioxidant response elements (AREs) on DNA. Interacts with KEAP1; the interaction is direct and promotes ubiquitination by the BCR(KEAP1) E3 ubiquitin ligase complex. Forms a ternary complex with PGAM5 and KEAP1. Interacts with EEF1D at heat shock promoter elements (HSE). Interacts via its leucine-zipper domain with the coiled-coil domain of PMF1. Interacts with CHD6; involved in activation of the transcription. Interacts with ESRRB; represses NFE2L2 transcriptional activity. Interacts with MOTS-c, a peptide produced by the mitochondrially encoded 12S rRNA MT-RNR1; the interaction occurs in the nucleus following metabolic stress. Ubiquitinated in the cytoplasm by the BCR(KEAP1) E3 ubiquitin ligase complex leading to its degradation. In response to oxidative stress, electrophile metabolites, such as sulforaphane, modify KEAP1, leading to inhibit activity of the BCR(KEAP1) complex, promoting NFE2L2/NRF2 nuclear accumulation and activity. In response to autophagy, the BCR(KEAP1) complex is inactivated. In terms of processing, phosphorylated by EIF2AK3/PERK following unfolded protein response (UPR), promoting dissociation from its cytoplasmic inhibitor KEAP1, followed by its translocation into the nucleus. Phosphorylation of Ser-40 by PKC in response to oxidative stress dissociates NFE2L2 from its cytoplasmic inhibitor KEAP1, promoting its translocation into the nucleus. Post-translationally, acetylation at Lys-588 and Lys-591 increases nuclear localization whereas deacetylation by SIRT1 enhances cytoplasmic presence. Glycation impairs transcription factor activity by preventing heterodimerization with small Maf proteins. Deglycation by FN3K restores activity. Widely expressed. Highest expression in liver, skeletal muscle, luminal cells of the stomach and intestine, lining of the bronchi and alveoli, and in renal tubules; followed by heart, spleen, testis and brain.

It localises to the cytoplasm. The protein localises to the cytosol. It is found in the nucleus. Functionally, transcription factor that plays a key role in the response to oxidative stress: binds to antioxidant response (ARE) elements present in the promoter region of many cytoprotective genes, such as phase 2 detoxifying enzymes, and promotes their expression, thereby neutralizing reactive electrophiles. In normal conditions, ubiquitinated and degraded in the cytoplasm by the BCR(KEAP1) complex. In response to oxidative stress, electrophile metabolites inhibit activity of the BCR(KEAP1) complex, promoting nuclear accumulation of NFE2L2/NRF2, heterodimerization with one of the small Maf proteins and binding to ARE elements of cytoprotective target genes. The NFE2L2/NRF2 pathway is also activated in response to selective autophagy: autophagy promotes interaction between KEAP1 and SQSTM1/p62 and subsequent inactivation of the BCR(KEAP1) complex, leading to NFE2L2/NRF2 nuclear accumulation and expression of cytoprotective genes. The NFE2L2/NRF2 pathway is also activated during the unfolded protein response (UPR), contributing to redox homeostasis and cell survival following endoplasmic reticulum stress. May also be involved in the transcriptional activation of genes of the beta-globin cluster by mediating enhancer activity of hypersensitive site 2 of the beta-globin locus control region. Also plays an important role in the regulation of the innate immune response. It is a critical regulator of the innate immune response and survival during sepsis by maintaining redox homeostasis and restraint of the dysregulation of pro-inflammatory signaling pathways like MyD88-dependent and -independent and TNF-alpha signaling. Suppresses macrophage inflammatory response by blocking pro-inflammatory cytokine transcription and the induction of IL6. Binds to the proximity of pro-inflammatory genes in macrophages and inhibits RNA Pol II recruitment. The inhibition is independent of the Nrf2-binding motif and reactive oxygen species level. Represses antiviral cytosolic DNA sensing by suppressing the expression of the adapter protein STING1 and decreasing responsiveness to STING1 agonists while increasing susceptibility to infection with DNA viruses. In Mus musculus (Mouse), this protein is Nuclear factor erythroid 2-related factor 2.